Reading from the N-terminus, the 434-residue chain is MTDAHQADDVRYQPLNELDPEVAAAIAGELARQRDTLEMIASENFVPRSVLQAQGSVLTNKYAEGYPGRRYYGGCEQVDIIEDLARDRAKALFGAEFANVQPHSGAQANAAVLMTLAEPGDKIMGLSLAHGGHLTHGMKLNFSGKLYEVVAYGVDPETMRVDMDQVREIALKEQPKVIIAGWSAYPRHLDFEAFQSIAAEVGAKLWVDMAHFAGLVAAGLHPSPVPYSDVVSSTVHKTLGGPRSGIILAKQEYAKKLNSSVFPGQQGGPLMHAVAAKATSLKIAGTEQFRDRQARTLEGARILAERLTASDAKAAGVDVLTGGTDVHLVLADLRNSQMDGQQAEDLLHEVGITVNRNAVPFDPRPPMVTSGLRIGTPALATRGFDIPAFTEVADIIGTALANGKSADIESLRGRVAKLAADYPLYEGLEDWTIV.

(6S)-5,6,7,8-tetrahydrofolate-binding positions include L128 and G132–L134. K237 bears the N6-(pyridoxal phosphate)lysine mark.

Belongs to the SHMT family. Homodimer. Requires pyridoxal 5'-phosphate as cofactor.

The protein localises to the cytoplasm. The catalysed reaction is (6R)-5,10-methylene-5,6,7,8-tetrahydrofolate + glycine + H2O = (6S)-5,6,7,8-tetrahydrofolate + L-serine. Its pathway is one-carbon metabolism; tetrahydrofolate interconversion. It participates in amino-acid biosynthesis; glycine biosynthesis; glycine from L-serine: step 1/1. Functionally, catalyzes the reversible interconversion of serine and glycine with tetrahydrofolate (THF) serving as the one-carbon carrier. This reaction serves as the major source of one-carbon groups required for the biosynthesis of purines, thymidylate, methionine, and other important biomolecules. Also exhibits THF-independent aldolase activity toward beta-hydroxyamino acids, producing glycine and aldehydes, via a retro-aldol mechanism. This is Serine hydroxymethyltransferase from Corynebacterium glutamicum (strain R).